The primary structure comprises 254 residues: Geranylgeranylglyceryl phosphate synthase (254 aa).

Asp27 and Ser56 together coordinate Mg(2+). Sn-glycerol 1-phosphate is bound by residues 174–180, 212–213, and 234–235; these read YLEAGSG, GG, and GT.

Belongs to the GGGP/HepGP synthase family. Group II subfamily. Homohexamer. Mg(2+) serves as cofactor.

It localises to the cytoplasm. It catalyses the reaction sn-glycerol 1-phosphate + (2E,6E,10E)-geranylgeranyl diphosphate = sn-3-O-(geranylgeranyl)glycerol 1-phosphate + diphosphate. The protein operates within membrane lipid metabolism; glycerophospholipid metabolism. Functionally, prenyltransferase that catalyzes the transfer of the geranylgeranyl moiety of geranylgeranyl diphosphate (GGPP) to the C3 hydroxyl of sn-glycerol-1-phosphate (G1P). This reaction is the first ether-bond-formation step in the biosynthesis of archaeal membrane lipids. This is Geranylgeranylglyceryl phosphate synthase from Aeropyrum pernix (strain ATCC 700893 / DSM 11879 / JCM 9820 / NBRC 100138 / K1).